We begin with the raw amino-acid sequence, 556 residues long: Double-strand-break repair protein rad21-like protein 1 (556 aa).

Belongs to the rad21 family. As to quaternary structure, component of some meiotic cohesin complex composed of the SMC1 (SMC1A or SMC1B) and SMC3 heterodimer attached via their hinge domain, RAD21L which link them, and STAG3.

Its subcellular location is the nucleus. The protein localises to the chromosome. Its function is as follows. Meiosis-specific component of some cohesin complex required during the initial steps of prophase I in male meiosis. Probably required during early meiosis in males for separation of sister chromatids and homologous chromosomes. Replaces RAD21 in premeiotic S phase (during early stages of prophase I), while RAD21 reappears in later stages of prophase I. Involved in synaptonemal complex assembly, synapsis initiation and crossover recombination between homologous chromosomes during prophase I. This Homo sapiens (Human) protein is Double-strand-break repair protein rad21-like protein 1 (RAD21L1).